Reading from the N-terminus, the 125-residue chain is Small ribosomal subunit protein uS12 (125 aa).

Asp-89 is modified (3-methylthioaspartic acid).

This sequence belongs to the universal ribosomal protein uS12 family. In terms of assembly, part of the 30S ribosomal subunit. Contacts proteins S8 and S17. May interact with IF1 in the 30S initiation complex.

Its function is as follows. With S4 and S5 plays an important role in translational accuracy. Functionally, interacts with and stabilizes bases of the 16S rRNA that are involved in tRNA selection in the A site and with the mRNA backbone. Located at the interface of the 30S and 50S subunits, it traverses the body of the 30S subunit contacting proteins on the other side and probably holding the rRNA structure together. The combined cluster of proteins S8, S12 and S17 appears to hold together the shoulder and platform of the 30S subunit. The protein is Small ribosomal subunit protein uS12 of Clostridium acetobutylicum (strain ATCC 824 / DSM 792 / JCM 1419 / IAM 19013 / LMG 5710 / NBRC 13948 / NRRL B-527 / VKM B-1787 / 2291 / W).